The following is a 30-amino-acid chain: Conotoxin TVIIA (30 aa).

3 disulfides stabilise this stretch: Cys2–Cys14, Cys9–Cys19, and Cys13–Cys24. 4-hydroxyproline occurs at positions 10 and 11.

In terms of processing, three different forms of TVIIA exist. Pro-10 and Pro-11 of conotoxin TVIIA are hydroxylated in TVIIA, whereas Pro-10 is not hydroxylated in [Pro10]TVIIA and neither Pro-10 nor Pro-11 are hydroxylated in [Pro10,11]TVIIA. In terms of tissue distribution, expressed by the venom duct.

The protein resides in the secreted. In terms of biological role, by structural similarity with conotoxin GS, may inhibit the sodium channel (Nav). No effect was observed upon intracranial injections into mice and intraperitoneal injections into goldfish (25 ug). This is Conotoxin TVIIA from Conus tulipa (Fish-hunting cone snail).